Consider the following 116-residue polypeptide: Promotilin (116 aa).

The signal sequence occupies residues 1-25 (MVSRKAVAVLLMVHVAVMLASQTEA). Positions 39–74 (REKERNKGQKKSLIVQQRSEEVGPLDPVEPPEEEEN) are disordered.

The protein belongs to the motilin family.

Its subcellular location is the secreted. In terms of biological role, plays an important role in the regulation of interdigestive gastrointestinal motility and indirectly causes rhythmic contraction of duodenal and colonic smooth muscle. This chain is Promotilin (MLN), found in Felis catus (Cat).